The primary structure comprises 926 residues: MYDAYTPCEVALRLPVEVTCLAFQESNQTLLAGGRAGHLYAYTISANRRGFELTNICKSFHKKAVMELKVCQREDLLLCVSDGQLMAHKLSDPEYKVETLIHKVKPVQTFARFSPKTSGDLYVIVSSRKKLYLFKWGEKDGHKEFIEVALDYNPVFLDTPTSIRCVGEMVFFSVRNEYFSMTMQKDKTTTSPSEGSTPEGWNGFVTRLLNFNCQPGIVPMIDRRRVAFVRNEIVVTTDIWGQRPANVLSDEYKFSEVPMQIVYDSPYLVGMLSKGRVEVRSIFDGQLVQTMSLPKAMTLCSGARGQVFVAALSDIWILDTSQNLRKNVSHLIQERHFELAIQLAENSNLFAEEQKLEIKKKAALNLFNQKKFDESFALFGEIKTDISEVLSIIRMFPELLPDGFQSMTGVVSDMPANDRMRALLALGSYLSEIRTEHAKHIELYNRLYSSGAAKKTDEDEKAKLLLTLRVVDTTLLKCYIKTKPMLVDSLIRLQSNACTFEDAKKILESEGRLRSLFILYETRKKHEMALDLFIDQSSRPDADPFFDDAIQQIVEYLQSLGNSNLPLILKYAKWVLAKNLEAGVQIFTSDETEMARNLNRKAVVEFLKSECPDALIPYLEHVIFKWEEPSSYFHETLLEFYVARVNTLFKDYVHAFPDAFSDENITRAGDEDGELGLYRKRLLKFLEVSHSYSPQTVLLQLAPHAFYEERALILGRLKQHEQALAIYVNTLKNVPAAEEYCRLYYNAHDETNSQVYLMLFRTLVHPNQQQLHSIPYHADSTPFGSYRDDVSEASTLVNSTSSYQPDVNTAIKILAKHADKIDTVGALNMLPATTPLRVVFSAINAVIQTTGRQASTRKMEKSVSQCAMSKKLERKNKAQSTKIIVNFSSECVVCEKKIAVSAFVRYPDGRLAHLYCHNDSQGGNRN.

One can recognise a CNH domain in the interval 15-306 (PVEVTCLAFQ…MTLCSGARGQ (292 aa)). Residues 590–768 (DETEMARNLN…LFRTLVHPNQ (179 aa)) form a CHCR repeat.

The protein belongs to the VAM6/VPS39 family. As to quaternary structure, probable core component of the homotypic fusion and vacuole protein sorting (HOPS) complex consisting of the core class C Vps proteins vps-11, vps-16, vps-18, and which further associates with vps-33.1, vps-39 and vps-41. May interact with lgg-2. Interacts with cuti-1.

Its subcellular location is the cytoplasm. It is found in the lysosome membrane. The protein resides in the late endosome membrane. The protein localises to the late endosome. It localises to the lysosome. Plays a role in vesicle-mediated protein trafficking to lysosomal compartments including the endocytic membrane transport and autophagic pathways. Believed to act in part as a component of the putative HOPS endosomal tethering complex which is proposed to be involved in the rab-5-to-rab-7 endosome conversion probably implicating sand-1, and via binding SNAREs and SNARE complexes to mediate tethering and docking events during SNARE-mediated membrane fusion. The HOPS complex is proposed to be recruited to rab-7 on the late endosomal membrane and to regulate late endocytic, phagocytic and autophagic traffic towards lysosomes. Involved in homotypic vesicle fusions between late endosomes and in heterotypic fusions between late endosomes and lysosomes. Required for fusion of endosomes. In association with lgg-2 mediates the tethering of autophagosomes with lysosomes to form autolysosomes. Within the HOPS complex, contributes to the normal development of gut granules in embryonic and adult intestinal cells. This Caenorhabditis elegans protein is Vacuolar protein sorting-associated protein 39 homolog.